The sequence spans 1034 residues: Protein argonaute 2 (1034 aa).

The disordered stretch occupies residues 1–201; the sequence is MEHERGGGGR…PMRRPDGGGS (201 aa). Residues 18-125 show a composition bias toward gly residues; that stretch reads GGRGGGGGDG…ESGGGGGRGG (108 aa). Residues 172-187 show a composition bias toward low complexity; that stretch reads VVRVQPPAPPVAVSRS. The region spanning 391–504 is the PAZ domain; the sequence is PVLDLVQKSV…VPIELCDLLE (114 aa). Residues 688–989 form the Piwi domain; it reads LLFCPMSDQH…AAYRGRLYYE (302 aa).

It belongs to the argonaute family. Ago subfamily.

In terms of biological role, probably involved in the RNA silencing pathway. May bind to short RNAs such as microRNAs (miRNAs) or short interfering RNAs (siRNAs), and represses the translation of mRNAs which are complementary to them. The protein is Protein argonaute 2 (AGO2) of Oryza sativa subsp. japonica (Rice).